The chain runs to 813 residues: G-type lectin S-receptor-like serine/threonine-protein kinase LECRK1 (813 aa).

The N-terminal stretch at 1–19 is a signal peptide; sequence MVALLLFPMLLQLLSPTCA. Over 20–466 the chain is Extracellular; sequence QTQKNITLGS…NRKHWVLGSS (447 aa). One can recognise a Bulb-type lectin domain in the interval 22-149; it reads QKNITLGSTL…DGTTKWQTFD (128 aa). N-linked (GlcNAc...) asparagine glycans are attached at residues Asn24, Asn57, Asn164, Asn168, Asn219, and Asn242. Residues 293 to 346 form the EGF-like; atypical domain; sequence PQNICHAIVSDVGSGVCGFNSYCTFDGTRNQIASCQCPPWYKFFDEQKKYKGCK. 5 disulfides stabilise this stretch: Cys297/Cys315, Cys309/Cys327, Cys329/Cys345, Cys391/Cys413, and Cys395/Cys401. A PAN domain is found at 354–433; that stretch reads CDLEEATALA…NMADYVQRTV (80 aa). Residues Asn407 and Asn441 are each glycosylated (N-linked (GlcNAc...) asparagine). The helical transmembrane segment at 467 to 487 threads the bilayer; the sequence is LILGTSILVNFALISIFLFGT. Residues 488–813 are Cytoplasmic-facing; that stretch reads YCRITTKKNI…DPCSFISSLP (326 aa). The region spanning 523–797 is the Protein kinase domain; sequence AGFHEILGAG…KVTQMLDGAV (275 aa). ATP-binding positions include 529–537 and Lys553; that span reads LGAGASGVV. Asp647 (proton acceptor) is an active-site residue.

Belongs to the protein kinase superfamily. Ser/Thr protein kinase family. In terms of assembly, interacts (via kinase domain) with ADF4. Expressed in plumules, radicles and panicles.

It is found in the membrane. It carries out the reaction L-seryl-[protein] + ATP = O-phospho-L-seryl-[protein] + ADP + H(+). The catalysed reaction is L-threonyl-[protein] + ATP = O-phospho-L-threonyl-[protein] + ADP + H(+). Its function is as follows. Involved in innate immunity. Required for the expression of defense-related genes PR1A, LOX2 and CHS1 upon biotic stresses. Required for basal resistance to the fungal blast (M.grisea), bacterial blight (O.oryzae pv. oryzae, Xoo) and the herbivorous insect brown planthopper (N.lugens, BPH). May be involved in several defense signaling pathways. Involved in the promotion of seed germination. Required for the expression of alpha-amylase genes during seed germination. Involved in resistance against the brown planthopper (BPH). Member of the BPH3 (BPH resistance locus 3) cluster which contains LECRK1, LECRK2 and LECRK3. In Oryza sativa subsp. indica (Rice), this protein is G-type lectin S-receptor-like serine/threonine-protein kinase LECRK1.